Here is a 92-residue protein sequence, read N- to C-terminus: Protein E7 (92 aa).

Positions 1–43 (MHGNRPSLKDITLILDEIPEIVDLHCDEQFDSSEEENNHQLTE) are E7 terminal domain. Residues 24-28 (LHCDE) carry the LXCXE motif; interaction with host RB1 and TMEM173/STING motif. The segment at 55 to 91 (CCKCGRTVRLVVECGQADLRELEQLFLKTLTLVCPHC) is a zinc-finger region. The Nuclear export signal motif lies at 73 to 81 (LRELEQLFL).

This sequence belongs to the papillomaviridae E7 protein family. As to quaternary structure, homodimer. Homooligomer. Interacts with host RB1; this interaction induces dissociation of RB1-E2F1 complex thereby disrupting RB1 activity. Interacts with host EP300; this interaction represses EP300 transcriptional activity. Interacts with protein E2; this interaction inhibits E7 oncogenic activity. Interacts with host TMEM173/STING; this interaction impairs the ability of TMEM173/STING to sense cytosolic DNA and promote the production of type I interferon (IFN-alpha and IFN-beta). Post-translationally, highly phosphorylated.

The protein resides in the host cytoplasm. It localises to the host nucleus. Functionally, plays a role in viral genome replication by driving entry of quiescent cells into the cell cycle. Stimulation of progression from G1 to S phase allows the virus to efficiently use the cellular DNA replicating machinery to achieve viral genome replication. E7 protein has both transforming and trans-activating activities. Induces the disassembly of the E2F1 transcription factor from RB1, with subsequent transcriptional activation of E2F1-regulated S-phase genes. Interferes with host histone deacetylation mediated by HDAC1 and HDAC2, leading to transcription activation. Also plays a role in the inhibition of both antiviral and antiproliferative functions of host interferon alpha. Interaction with host TMEM173/STING impairs the ability of TMEM173/STING to sense cytosolic DNA and promote the production of type I interferon (IFN-alpha and IFN-beta). The sequence is that of Protein E7 from Homo sapiens (Human).